Reading from the N-terminus, the 708-residue chain is Exocyst complex component 5 (708 aa).

An N-acetylalanine modification is found at Ala2. A coiled-coil region spans residues 40–101 (KRLLEEFVNH…AFQHFQELDE (62 aa)). Thr122, Thr395, and Thr405 each carry phosphothreonine. Position 412 is a phosphoserine (Ser412).

The protein belongs to the SEC10 family. The exocyst complex is composed of EXOC1, EXOC2, EXOC3, EXOC4, EXOC5, EXOC6, EXOC7 and EXOC8. Interacts with EXOC3L1. Ubiquitous.

Its subcellular location is the cytoplasm. It localises to the midbody. Component of the exocyst complex involved in the docking of exocytic vesicles with fusion sites on the plasma membrane. The sequence is that of Exocyst complex component 5 (EXOC5) from Homo sapiens (Human).